The following is a 594-amino-acid chain: Golgi-associated RAB2 interactor protein 4 (594 aa).

Residues 387-524 (MDAAAGPPVS…TSSGSSKGLG (138 aa)) form a disordered region. The segment covering 396–406 (STRQSKSSLSG) has biased composition (polar residues). 3 stretches are compositionally biased toward basic and acidic residues: residues 408-433 (HGRE…DRAL), 442-455 (TGES…DKIA), and 468-477 (ANRDDKKEKG). Residues 511–520 (SLWTTSSGSS) are compositionally biased toward polar residues.

The protein belongs to the GARIN family. In terms of assembly, interacts (via N-terminus) with RAB2B (in GTP-bound form).

The protein resides in the golgi apparatus. Functionally, RAB2B effector protein required for the compacted Golgi morphology, probably through interaction with small GTPase RAB2B. This chain is Golgi-associated RAB2 interactor protein 4, found in Homo sapiens (Human).